A 503-amino-acid polypeptide reads, in one-letter code: UDP-N-acetylmuramoylalanine--D-glutamate ligase (503 aa).

ATP is bound at residue 129–135; that stretch reads GTNGKTT.

This sequence belongs to the MurCDEF family.

Its subcellular location is the cytoplasm. It carries out the reaction UDP-N-acetyl-alpha-D-muramoyl-L-alanine + D-glutamate + ATP = UDP-N-acetyl-alpha-D-muramoyl-L-alanyl-D-glutamate + ADP + phosphate + H(+). It participates in cell wall biogenesis; peptidoglycan biosynthesis. Its function is as follows. Cell wall formation. Catalyzes the addition of glutamate to the nucleotide precursor UDP-N-acetylmuramoyl-L-alanine (UMA). This chain is UDP-N-acetylmuramoylalanine--D-glutamate ligase, found in Burkholderia vietnamiensis (strain G4 / LMG 22486) (Burkholderia cepacia (strain R1808)).